Here is a 352-residue protein sequence, read N- to C-terminus: Rhodopsin (352 aa).

Residues 1–36 (MNGTEGPFFYIPMVNTTGIVRSPYEYPQYYLVNPAA) are Extracellular-facing. 2 N-linked (GlcNAc...) asparagine glycosylation sites follow: Asn-2 and Asn-15. A helical transmembrane segment spans residues 37–61 (YAALGAYMFFLILTGFPINFLTLYV). Residues 62 to 73 (TLEHKKLRTALN) lie on the Cytoplasmic side of the membrane. The helical transmembrane segment at 74–96 (LILLNLAVADLFMVFGGFTTTMY) threads the bilayer. Residues 97–110 (TSMHGYFVLGRLGC) lie on the Extracellular side of the membrane. A disulfide bridge connects residues Cys-110 and Cys-187. A helical membrane pass occupies residues 111–133 (NVEGFFATLGGEIALWSLVVLAV). Residues 134-136 (ERW) carry the 'Ionic lock' involved in activated form stabilization motif. Topologically, residues 134–152 (ERWVVVCKPISNFRFTENH) are cytoplasmic. Residues 153–173 (AIMGVAFSWIMAATCAVPPLV) form a helical membrane-spanning segment. Residues 174–202 (GWSRYIPEGMQCSCGVDYYTRAEGFNNES) are Extracellular-facing. Residues 203-224 (FVIYMFIVHFLAPLIVIFFCYG) form a helical membrane-spanning segment. Topologically, residues 225–252 (RLLCAVKEAAAAQQESETTQRAEREVTR) are cytoplasmic. Residues 253 to 274 (MVIIMVIGFLTSWLPYASVAWY) traverse the membrane as a helical segment. The Extracellular segment spans residues 275–286 (IFTHQGTEFGPL). A helical membrane pass occupies residues 287–308 (FMTIPAFFAKSSALYNPMIYIC). N6-(retinylidene)lysine is present on Lys-296. Topologically, residues 309 to 352 (MNKQFRHCMITTLCCGKNPFEEEEGASTTKTEASSVSSSSVSPA) are cytoplasmic. S-palmitoyl cysteine attachment occurs at residues Cys-322 and Cys-323. Residues 331-352 (EEGASTTKTEASSVSSSSVSPA) form a disordered region. Low complexity predominate over residues 342–352 (SSVSSSSVSPA).

This sequence belongs to the G-protein coupled receptor 1 family. Opsin subfamily. Post-translationally, phosphorylated on some or all of the serine and threonine residues present in the C-terminal region. Contains one covalently linked retinal chromophore.

It localises to the membrane. It is found in the cell projection. The protein resides in the cilium. The protein localises to the photoreceptor outer segment. In terms of biological role, photoreceptor required for image-forming vision at low light intensity. While most salt water fish species use retinal as chromophore, most freshwater fish use 3-dehydroretinal, or a mixture of retinal and 3-dehydroretinal. Light-induced isomerization of 11-cis to all-trans retinal triggers a conformational change that activates signaling via G-proteins. Subsequent receptor phosphorylation mediates displacement of the bound G-protein alpha subunit by arrestin and terminates signaling. This Pomatoschistus minutus (Sand goby) protein is Rhodopsin (rho).